The following is a 1933-amino-acid chain: Protein TIC 214 (1933 aa).

6 helical membrane passes run 18-38, 60-80, 87-107, 128-148, 176-196, and 230-250; these read IVNS…FSIG, ATTG…YAPL, PHTI…FYTD, FSIQ…HFIL, VGWL…LVWI, and IFYI…PAPL. Disordered regions lie at residues 266 to 291, 473 to 514, 808 to 832, and 1066 to 1121; these read AKGK…VGVG, KTKS…SRDN, THRE…AEDP, and ESFT…SSNA. Residues 278–289 show a composition bias toward acidic residues; it reads EEGDVEKEDEVG. Positions 476–487 are enriched in polar residues; it reads SLSPEKTSGDNL. Composition is skewed to basic and acidic residues over residues 488-514 and 819-832; these read ETSR…SRDN and DEKN…AEDP. Over residues 1066 to 1078 the composition is skewed to polar residues; sequence ESFTQISSPSSTN. Basic residues predominate over residues 1105–1115; the sequence is KEKKKKKRSLK. The chain crosses the membrane as a helical span at residues 1135–1155; it reads LPVYLKLFIQRIYTGIFFSII. A disordered region spans residues 1562-1642; the sequence is NADNEKNEKK…SAESTTKKVT (81 aa). The segment covering 1564–1642 has biased composition (basic and acidic residues); the sequence is DNEKNEKKEA…SAESTTKKVT (79 aa).

This sequence belongs to the TIC214 family. In terms of assembly, part of the Tic complex.

It localises to the plastid. The protein resides in the chloroplast inner membrane. In terms of biological role, involved in protein precursor import into chloroplasts. May be part of an intermediate translocation complex acting as a protein-conducting channel at the inner envelope. The protein is Protein TIC 214 of Jasminum nudiflorum (Winter jasmine).